A 424-amino-acid chain; its full sequence is Serine--tRNA ligase (424 aa).

An L-serine-binding site is contributed by 233–235; that stretch reads TAE. Position 264–266 (264–266) interacts with ATP; it reads RKE. Glu-287 provides a ligand contact to L-serine. Position 351 to 354 (351 to 354) interacts with ATP; that stretch reads EISS. L-serine is bound at residue Ser-386.

Belongs to the class-II aminoacyl-tRNA synthetase family. Type-1 seryl-tRNA synthetase subfamily. Homodimer. The tRNA molecule binds across the dimer.

Its subcellular location is the cytoplasm. The enzyme catalyses tRNA(Ser) + L-serine + ATP = L-seryl-tRNA(Ser) + AMP + diphosphate + H(+). It catalyses the reaction tRNA(Sec) + L-serine + ATP = L-seryl-tRNA(Sec) + AMP + diphosphate + H(+). The protein operates within aminoacyl-tRNA biosynthesis; selenocysteinyl-tRNA(Sec) biosynthesis; L-seryl-tRNA(Sec) from L-serine and tRNA(Sec): step 1/1. Its function is as follows. Catalyzes the attachment of serine to tRNA(Ser). Is also able to aminoacylate tRNA(Sec) with serine, to form the misacylated tRNA L-seryl-tRNA(Sec), which will be further converted into selenocysteinyl-tRNA(Sec). The chain is Serine--tRNA ligase from Elusimicrobium minutum (strain Pei191).